Reading from the N-terminus, the 359-residue chain is Peptide chain release factor 1 (359 aa).

Gln-235 bears the N5-methylglutamine mark. The span at 283-294 (SKADEERSESRK) shows a compositional bias: basic and acidic residues. The interval 283-309 (SKADEERSESRKSQVGSGDRSERIRTY) is disordered.

This sequence belongs to the prokaryotic/mitochondrial release factor family. Methylated by PrmC. Methylation increases the termination efficiency of RF1.

It is found in the cytoplasm. Peptide chain release factor 1 directs the termination of translation in response to the peptide chain termination codons UAG and UAA. The chain is Peptide chain release factor 1 from Mesorhizobium japonicum (strain LMG 29417 / CECT 9101 / MAFF 303099) (Mesorhizobium loti (strain MAFF 303099)).